The primary structure comprises 600 residues: Proline--tRNA ligase (600 aa).

This sequence belongs to the class-II aminoacyl-tRNA synthetase family. ProS type 1 subfamily. In terms of assembly, homodimer.

It localises to the cytoplasm. It carries out the reaction tRNA(Pro) + L-proline + ATP = L-prolyl-tRNA(Pro) + AMP + diphosphate. Functionally, catalyzes the attachment of proline to tRNA(Pro) in a two-step reaction: proline is first activated by ATP to form Pro-AMP and then transferred to the acceptor end of tRNA(Pro). As ProRS can inadvertently accommodate and process non-cognate amino acids such as alanine and cysteine, to avoid such errors it has two additional distinct editing activities against alanine. One activity is designated as 'pretransfer' editing and involves the tRNA(Pro)-independent hydrolysis of activated Ala-AMP. The other activity is designated 'posttransfer' editing and involves deacylation of mischarged Ala-tRNA(Pro). The misacylated Cys-tRNA(Pro) is not edited by ProRS. The chain is Proline--tRNA ligase from Synechococcus sp. (strain ATCC 27144 / PCC 6301 / SAUG 1402/1) (Anacystis nidulans).